Reading from the N-terminus, the 98-residue chain is Cystatin-B (98 aa).

An N-acetylmethionine modification is found at Met-1. A Secondary area of contact motif is present at residues 46–50 (QLVAG).

The protein belongs to the cystatin family. As to quaternary structure, able to form dimers stabilized by noncovalent forces.

Its subcellular location is the cytoplasm. Functionally, this is an intracellular thiol proteinase inhibitor. The sequence is that of Cystatin-B (CSTB) from Ovis aries (Sheep).